Reading from the N-terminus, the 663-residue chain is Protein THEMIS2 (663 aa).

CABIT regions lie at residues 2–237 and 238–515; these read EPVP…TASS and QHIH…EAEG. Positions 545-663 are disordered; that stretch reads ASESQAPPPR…DMDDHDYEEI (119 aa). A compositionally biased stretch (polar residues) spans 559-577; it reads QGINKKQQNIQSCKESSVK. T596 bears the Phosphothreonine mark. Polar residues predominate over residues 621–641; the sequence is NPQTQNSVLSMKPKTSSSLGK. Acidic residues predominate over residues 653–663; the sequence is PDMDDHDYEEI. Y660 is modified (phosphotyrosine).

This sequence belongs to the themis family. As to quaternary structure, interacts with VAV1. Interacts with LAT. Interacts constitutively with GRB2, LYN and PLCG2; these interactions increase the activation of PLCG2 and its downstream pathways following B cell receptor stimulation. Phosphorylation at Tyr-660 is induced by LPS. Phosphorylated by Src kinases (Lck or Fyn) following BCR engagement. As to expression, expressed in both developing and mature B-cells with high expression in immature, follicular and B1 B cells. Also expressed in macrophages and dendritic cells. Down-regulated in splenocytes of mice developing arthritis in a collagen-induced model, not in those of mice failing to develop the disease. Transiently down-regulated in splenocytes of mice infected with influenza virus.

It localises to the nucleus. The protein localises to the cytoplasm. Functionally, may constitute a control point in macrophage inflammatory response, promoting LPS-induced TLR4-mediated TNF production. Determines the threshold for activation of B cells by low-affinity and low-avidity ligands via PLCG2 activation and its downstream pathways. The sequence is that of Protein THEMIS2 from Mus musculus (Mouse).